The chain runs to 202 residues: FMN-dependent NADH:quinone oxidoreductase 2 (202 aa).

Residues S9, 15-17, 93-96, and 137-140 contribute to the FMN site; these read SVS, MYNF, and SRGG.

This sequence belongs to the azoreductase type 1 family. As to quaternary structure, homodimer. The cofactor is FMN.

It carries out the reaction 2 a quinone + NADH + H(+) = 2 a 1,4-benzosemiquinone + NAD(+). The enzyme catalyses N,N-dimethyl-1,4-phenylenediamine + anthranilate + 2 NAD(+) = 2-(4-dimethylaminophenyl)diazenylbenzoate + 2 NADH + 2 H(+). Its function is as follows. Quinone reductase that provides resistance to thiol-specific stress caused by electrophilic quinones. In terms of biological role, also exhibits azoreductase activity. Catalyzes the reductive cleavage of the azo bond in aromatic azo compounds to the corresponding amines. This Bradyrhizobium diazoefficiens (strain JCM 10833 / BCRC 13528 / IAM 13628 / NBRC 14792 / USDA 110) protein is FMN-dependent NADH:quinone oxidoreductase 2.